The following is a 395-amino-acid chain: G-protein coupled receptor 182 (395 aa).

The Extracellular segment spans residues 1-53; the sequence is MSVIPSPRPVSTLEPDNDFRDIHNWTELLHLFNQTFTDCHIEFNENTKHVVLF. N24 and N33 each carry an N-linked (GlcNAc...) asparagine glycan. Residues 54–75 traverse the membrane as a helical segment; sequence VFYLAIFVVGLVENVLVICVNC. Residues 76 to 86 are Cytoplasmic-facing; the sequence is RRSGRVGMLNL. The chain crosses the membrane as a helical span at residues 87–109; it reads YILNMAIADLGIILSLPVWMLEV. Residues 110–123 lie on the Extracellular side of the membrane; it reads MLEYTWLWGSFSCR. C122 and C198 are oxidised to a cystine. Residues 124 to 145 traverse the membrane as a helical segment; that stretch reads FIHYFYLVNMYSSIFFLTCLSI. The Cytoplasmic segment spans residues 146 to 166; it reads DRYVTLTNTSPSWQRHQHRIR. A helical transmembrane segment spans residues 167–189; that stretch reads RAVCAGVWVLSAIIPLPEVVHIQ. Residues 190–213 are Extracellular-facing; sequence LLDGSEPMCLFLAPFETYSAWALA. Residues 214–235 form a helical membrane-spanning segment; sequence VALSATILGFLLPFLLIAVFNI. Topologically, residues 236–254 are cytoplasmic; the sequence is LTACRLRRQRQTESRRHCL. The chain crosses the membrane as a helical span at residues 255–276; the sequence is LMWAYIVVFAICWLPYQVTMLL. Over 277 to 295 the chain is Extracellular; it reads LTLHGTHIFLHCHLVNLLY. Residues 296 to 316 traverse the membrane as a helical segment; it reads FFYEIIDCFSMLHCVANPILY. Residues 317 to 395 lie on the Cytoplasmic side of the membrane; that stretch reads NFLSPSFRGR…QTPHLHSAIL (79 aa). Position 329 is a phosphoserine (S329).

This sequence belongs to the G-protein coupled receptor 1 family. Expressed in liver and lung.

It is found in the cell membrane. Its function is as follows. Orphan receptor. In Mus musculus (Mouse), this protein is G-protein coupled receptor 182 (Gpr182).